An 804-amino-acid polypeptide reads, in one-letter code: Leucine--tRNA ligase (804 aa).

The 'HIGH' region signature appears at 39–50; that stretch reads PFPSGKGLHVGH. The 'KMSKS' region motif lies at 573–577; sequence KMSKS. Residue K576 participates in ATP binding.

Belongs to the class-I aminoacyl-tRNA synthetase family.

It is found in the cytoplasm. The catalysed reaction is tRNA(Leu) + L-leucine + ATP = L-leucyl-tRNA(Leu) + AMP + diphosphate. The chain is Leucine--tRNA ligase from Lactobacillus johnsonii (strain CNCM I-12250 / La1 / NCC 533).